A 138-amino-acid chain; its full sequence is MRTLWIVAVLLLGVEGNLWQFEMLIMKIAKTSGFLFYSSYGCYCGWGGHGRPQDATDRCCFVHDCCYGKVTGCNPKTDSYTYSEENGDVVCGGDDPCKKQICECDRVAATCFRDNKDTYDNKYWFYPAKNCQEESEPC.

A signal peptide spans 1–16 (MRTLWIVAVLLLGVEG). Cystine bridges form between C42–C131, C44–C60, C59–C111, C65–C138, C66–C104, C73–C97, and C91–C102. Ca(2+) contacts are provided by Y43, G45, and G47. The active site involves H63. D64 lines the Ca(2+) pocket. D105 is a catalytic residue.

The protein belongs to the phospholipase A2 family. Group II subfamily. D49 sub-subfamily. Ca(2+) serves as cofactor. In terms of tissue distribution, expressed by the venom gland.

The protein localises to the secreted. It carries out the reaction a 1,2-diacyl-sn-glycero-3-phosphocholine + H2O = a 1-acyl-sn-glycero-3-phosphocholine + a fatty acid + H(+). In terms of biological role, snake venom phospholipase A2 (PLA2) that inhibits ADP- and collagen-induced platelet aggregation, has edema-inducing, anti-coagulant activity, antibacterial activity, and cytotoxic activity. In vivo, has a hypotensive effect. PLA2 catalyzes the calcium-dependent hydrolysis of the 2-acyl groups in 3-sn-phosphoglycerides. The protein is Acidic phospholipase A2 BmooPLA2 of Bothrops moojeni (Lance-headed viper).